Here is a 652-residue protein sequence, read N- to C-terminus: Chaperone protein HtpG (652 aa).

The segment at 1–351 (MTEHVEQLEF…AQDLSLNVSR (351 aa)) is a; substrate-binding. Residues 352–568 (EILQQDRQIQ…VFDFTPMLER (217 aa)) form a b region. The interval 569-652 (MYRASGQPVP…ILTDRLTRTL (84 aa)) is c.

It belongs to the heat shock protein 90 family. As to quaternary structure, homodimer.

It is found in the cytoplasm. Molecular chaperone. Has ATPase activity. The protein is Chaperone protein HtpG of Nocardia farcinica (strain IFM 10152).